The following is a 164-amino-acid chain: Phosphopantetheine adenylyltransferase (164 aa).

Ser-9 contributes to the substrate binding site. ATP is bound by residues 9–10 and His-17; that span reads SF. 3 residues coordinate substrate: Lys-41, Leu-73, and Lys-87. ATP contacts are provided by residues 88-90, Glu-98, and 123-129; these read GLR and YSYLSSS.

The protein belongs to the bacterial CoaD family. In terms of assembly, homohexamer. Mg(2+) is required as a cofactor.

Its subcellular location is the cytoplasm. The catalysed reaction is (R)-4'-phosphopantetheine + ATP + H(+) = 3'-dephospho-CoA + diphosphate. The protein operates within cofactor biosynthesis; coenzyme A biosynthesis; CoA from (R)-pantothenate: step 4/5. Functionally, reversibly transfers an adenylyl group from ATP to 4'-phosphopantetheine, yielding dephospho-CoA (dPCoA) and pyrophosphate. The protein is Phosphopantetheine adenylyltransferase of Clostridium botulinum (strain 657 / Type Ba4).